Here is a 209-residue protein sequence, read N- to C-terminus: Uracil phosphoribosyltransferase (209 aa).

Residues Arg-77, Arg-102, and 129–137 (DPMLATGVS) contribute to the 5-phospho-alpha-D-ribose 1-diphosphate site. Residues Ile-192 and 197–199 (GDA) contribute to the uracil site. Asp-198 is a binding site for 5-phospho-alpha-D-ribose 1-diphosphate.

Belongs to the UPRTase family. Mg(2+) is required as a cofactor.

It catalyses the reaction UMP + diphosphate = 5-phospho-alpha-D-ribose 1-diphosphate + uracil. The protein operates within pyrimidine metabolism; UMP biosynthesis via salvage pathway; UMP from uracil: step 1/1. Allosterically activated by GTP. In terms of biological role, catalyzes the conversion of uracil and 5-phospho-alpha-D-ribose 1-diphosphate (PRPP) to UMP and diphosphate. This is Uracil phosphoribosyltransferase from Metamycoplasma arthritidis (strain 158L3-1) (Mycoplasma arthritidis).